The primary structure comprises 158 residues: Small ribosomal subunit protein uS7 (158 aa).

The protein belongs to the universal ribosomal protein uS7 family. Part of the 30S ribosomal subunit. Contacts proteins S9 and S11.

One of the primary rRNA binding proteins, it binds directly to 16S rRNA where it nucleates assembly of the head domain of the 30S subunit. Is located at the subunit interface close to the decoding center, probably blocks exit of the E-site tRNA. The chain is Small ribosomal subunit protein uS7 from Leptospira biflexa.